The following is a 90-amino-acid chain: Putative large ribosomal subunit protein uL23c (90 aa).

The interval 1–46 (MDGIKYAVFTDKSIQLLGKKQYTSNVESRSTRTEIKHWVELWNSYE) is coded by first part of gene. The tract at residues 47–90 (MNSHRLPGKGRRMGPIMGHTMHYRRMIITLQSSYSIPPLRKKRT) is coded by second part of gene.

The protein belongs to the universal ribosomal protein uL23 family. In terms of assembly, part of the 50S ribosomal subunit.

Its subcellular location is the plastid. The protein resides in the chloroplast. In terms of biological role, binds to 23S rRNA. The chain is Putative large ribosomal subunit protein uL23c (rpl23) from Spinacia oleracea (Spinach).